The primary structure comprises 113 residues: Large ribosomal subunit protein bL17 (113 aa).

Belongs to the bacterial ribosomal protein bL17 family. Part of the 50S ribosomal subunit. Contacts protein L32.

This is Large ribosomal subunit protein bL17 from Clostridium perfringens (strain ATCC 13124 / DSM 756 / JCM 1290 / NCIMB 6125 / NCTC 8237 / Type A).